A 304-amino-acid polypeptide reads, in one-letter code: Capsid protein (304 aa).

Basic and acidic residues-rich tracts occupy residues 1 to 24 (MGDSTKKAETAKDEGTSQERREAR) and 32 to 54 (FEGKDTSENTDGRAADADGEMSL). The tract at residues 1–54 (MGDSTKKAETAKDEGTSQERREARPLPTAADFEGKDTSENTDGRAADADGEMSL) is disordered.

The protein belongs to the potexviruses coat protein family.

Its subcellular location is the virion. Functionally, required for genome encapsidation. Forms ribonucleoprotein complexes along with TGB1 helicase and viral RNA. This chain is Capsid protein, found in Potato virus M (strain Russian) (PVM).